We begin with the raw amino-acid sequence, 142 residues long: Large ribosomal subunit protein uL11 (142 aa).

It belongs to the universal ribosomal protein uL11 family. In terms of assembly, part of the ribosomal stalk of the 50S ribosomal subunit. Interacts with L10 and the large rRNA to form the base of the stalk. L10 forms an elongated spine to which L12 dimers bind in a sequential fashion forming a multimeric L10(L12)X complex. Post-translationally, one or more lysine residues are methylated.

Functionally, forms part of the ribosomal stalk which helps the ribosome interact with GTP-bound translation factors. The chain is Large ribosomal subunit protein uL11 from Histophilus somni (strain 129Pt) (Haemophilus somnus).